The chain runs to 655 residues: Endoplasmic reticulum chaperone BiP (655 aa).

Residues M1–A19 form the signal peptide. The segment at M1–A81 is required for interaction with ELAPOR1. G37–Y40 contributes to the ATP binding site. S87 bears the Phosphoserine mark. Position 97 (K97) interacts with ATP. K126 is subject to N6-acetyllysine. The tract at residues K126–K281 is nucleotide-binding (NBD). The residue at position 161 (Y161) is a 3'-nitrotyrosine. The residue at position 214 (K214) is an N6-acetyllysine. G228 to T230 provides a ligand contact to ATP. K272 carries the N6-acetyllysine modification. An ATP-binding site is contributed by E294–S301. An N6-acetyllysine modification is found at K327. K353 participates in a covalent cross-link: Glycyl lysine isopeptide (Lys-Gly) (interchain with G-Cter in SUMO2). N6-acetyllysine; alternate is present on K354. K354 is covalently cross-linked (Glycyl lysine isopeptide (Lys-Gly) (interchain with G-Cter in SUMO1); alternate). G365–R368 contacts ATP. Residues Q410–V420 form an interdomain linker region. The tract at residues C421–T501 is substrate-binding (SBD). K448 is modified (N6-succinyllysine). R493 is modified (omega-N-methylarginine). The residue at position 519 (T519) is an O-AMP-threonine; alternate. Phosphothreonine; alternate is present on T519. N6,N6,N6-trimethyllysine; by METTL21A; in vitro is present on K586. K586 is subject to N6,N6-dimethyllysine; alternate. K586 is modified (N6-methyllysine; alternate). Position 592 is an N6-methyllysine (K592). Residues I632–L655 are disordered. Phosphothreonine is present on residues T644 and T649. Residues G645–L655 are compositionally biased toward acidic residues. A Phosphoserine modification is found at S650. The Prevents secretion from ER motif lies at K652 to L655.

This sequence belongs to the heat shock protein 70 family. In terms of assembly, monomer and homooligomer; homooligomerization via the interdomain linker inactivates the chaperone activity and acts as a storage of HSPA5/BiP molecules. Interacts with DNAJC1 (via J domain). Component of an EIF2 complex at least composed of CELF1/CUGBP1, CALR, CALR3, EIF2S1, EIF2S2, HSP90B1 and HSPA5. Part of a large chaperone multiprotein complex comprising DNAJB11, HSP90B1, HSPA5, HYOU, PDIA2, PDIA4, PDIA6, PPIB, SDF2L1, UGGT1 and very small amounts of ERP29, but not, or at very low levels, CALR nor CANX. Interacts with TMEM132A and TRIM21. May form a complex with ERLEC1, OS9, SEL1L and SYVN1. Interacts with DNAJC10. Interacts with DNAJB9/ERdj4; leading to recruit HSPA5/BiP to ERN1/IRE1. Interacts with ERN1/IRE1 (via luminal domain); the interaction takes place following interaction with DNAJB9/ERdj4 and leads to inactivate ERN1/IRE1, the interaction also competitively inhibits ERN1 interaction with MANF. Interacts directly with MANF (via SAP domain); the interaction inhibits ATP binding to HSPA5/BiP and subsequent nucleotide exchange. Interacts with ERN1 (via luminal domain); the interaction competitively inhibits ERN1 interaction with MANF. Interacts with EIF2AK3/PERK (via luminal domain); interaction leads to inactivate EIF2AK3/PERK. Interacts with MX1. Interacts with METTL23. Interacts with CEMIP; the interaction induces calcium leakage from the endoplasmic reticulum and cell migration. Interacts with PCSK4 form; the interaction takes place in the endoplasmic reticulum. Interacts with CIPC. Interacts with CCDC88B (via C-terminus); the interaction opposes ERN1-mediated JNK activation, protecting against apoptosis. Interacts with INPP5K; necessary for INPP5K localization at the endoplasmic reticulum. Interacts with MANF; the interaction is direct. Interacts with LOXL2; leading to activate the ERN1/IRE1-XBP1 pathway of the unfolded protein response. Interacts with CLU under stressed condition; interaction increases CLU protein stability; facilitates its retrotranslocation and redistribution to the mitochondria; cooperatively suppress stress-induced apoptosis by stabilizing mitochondrial membrane integrity. Interacts with CCDC47. Interacts with CLN3. Interacts with ELAPOR1; may regulate the function of HSPA5 in apoptosis and cell proliferation. Interacts with CASP7. Interacts with ILDR2; the interaction stabilizes ILDR2 expression. Interacts with ADAM7. In terms of processing, in unstressed cells, AMPylation at Thr-519 by FICD inactivates the chaperome activity: AMPylated form is locked in a relatively inert state and only weakly stimulated by J domain-containing proteins. In response to endoplasmic reticulum stress, de-AMPylation by the same protein, FICD, restores the chaperone activity. As to expression, expressed in sperm (at protein level).

The protein resides in the endoplasmic reticulum lumen. It localises to the melanosome. It is found in the cytoplasm. Its subcellular location is the cell surface. The catalysed reaction is ATP + H2O = ADP + phosphate + H(+). The chaperone activity is regulated by ATP-induced allosteric coupling of the nucleotide-binding (NBD) and substrate-binding (SBD) domains. In the ADP-bound and nucleotide-free (apo) states, the two domains have little interaction. In contrast, in the ATP-bound state the two domains are tightly coupled, which results in drastically accelerated kinetics in both binding and release of polypeptide substrates. J domain-containing co-chaperones (DNAJB9/ERdj4 or DNAJC10/ERdj5) stimulate the ATPase activity and are required for efficient substrate recognition by HSPA5/BiP. Homooligomerization inactivates participating HSPA5/BiP protomers and probably act as reservoirs to store HSPA5/BiP molecules when they are not needed by the cell. In terms of biological role, endoplasmic reticulum chaperone that plays a key role in protein folding and quality control in the endoplasmic reticulum lumen. Involved in the correct folding of proteins and degradation of misfolded proteins via its interaction with DNAJC10/ERdj5, probably to facilitate the release of DNAJC10/ERdj5 from its substrate. Acts as a key repressor of the EIF2AK3/PERK and ERN1/IRE1-mediated unfolded protein response (UPR). In the unstressed endoplasmic reticulum, recruited by DNAJB9/ERdj4 to the luminal region of ERN1/IRE1, leading to disrupt the dimerization of ERN1/IRE1, thereby inactivating ERN1/IRE1. Also binds and inactivates EIF2AK3/PERK in unstressed cells. Accumulation of misfolded protein in the endoplasmic reticulum causes release of HSPA5/BiP from ERN1/IRE1 and EIF2AK3/PERK, allowing their homodimerization and subsequent activation. Plays an auxiliary role in post-translational transport of small presecretory proteins across endoplasmic reticulum (ER). May function as an allosteric modulator for SEC61 channel-forming translocon complex, likely cooperating with SEC62 to enable the productive insertion of these precursors into SEC61 channel. Appears to specifically regulate translocation of precursors having inhibitory residues in their mature region that weaken channel gating. May also play a role in apoptosis and cell proliferation. The polypeptide is Endoplasmic reticulum chaperone BiP (Mus musculus (Mouse)).